Here is a 104-residue protein sequence, read N- to C-terminus: Large ribosomal subunit protein uL24 (104 aa).

Belongs to the universal ribosomal protein uL24 family. Part of the 50S ribosomal subunit.

One of two assembly initiator proteins, it binds directly to the 5'-end of the 23S rRNA, where it nucleates assembly of the 50S subunit. In terms of biological role, one of the proteins that surrounds the polypeptide exit tunnel on the outside of the subunit. This Ectopseudomonas mendocina (strain ymp) (Pseudomonas mendocina) protein is Large ribosomal subunit protein uL24.